The primary structure comprises 217 residues: Nascent polypeptide-associated complex subunit alpha (217 aa).

The segment at 1–45 is disordered; it reads MPELTEIKSEAAPSTSAEAKPEDVRVEDDGSDSDSDGGMPGLEEA. The span at 19 to 28 shows a compositional bias: basic and acidic residues; sequence AKPEDVRVED. The 66-residue stretch at 70 to 135 folds into the NAC-A/B domain; the sequence is SRGEKKARKI…AKIEDLSQQA (66 aa). The tract at residues 154–177 is disordered; the sequence is SVGATTSVAPIAEEDEEDVDDTGV. Over residues 165 to 176 the composition is skewed to acidic residues; it reads AEEDEEDVDDTG. Residues 177-217 enclose the UBA domain; the sequence is VDEKDIELVITQANTTRAKAIKALKNNNNDIVNAIMELTML.

This sequence belongs to the NAC-alpha family. In terms of assembly, part of the nascent polypeptide-associated complex (NAC), consisting of Nac-alpha and bicaudal (bic).

In terms of biological role, may promote appropriate targeting of ribosome-nascent polypeptide complexes. Required for correct localization of the osk/oskar protein to the posterior pole during embryonic development. The osk protein directs the recruitment of molecules responsible for posterior body patterning and germline formation in the embryo. This Drosophila melanogaster (Fruit fly) protein is Nascent polypeptide-associated complex subunit alpha (Nacalpha).